The following is a 245-amino-acid chain: MYPVDLHMHTVASTHAYSTLSDYIAQAKRKGIKLFSITDHGPDMADAPHHWHFINMRIWPRIVDGVGILRGIEANIKNTEGEIDCFGQMYDSLDLIIAGFHEPVFAPHDKATNTQAMIATIASGNVHIISHPGNPKYPIDIMAVAEAAAKHQVALEINNSSFIHSRKGSEDNCRAVAAAVRDAGGWIALGSDSHTAYTLGEFDEALKIIEAVDFPEDRILNVSPARMLGFLESRGMTPIAEFAEL.

Zn(2+) contacts are provided by histidine 7, histidine 9, histidine 15, histidine 40, glutamate 73, histidine 101, histidine 131, aspartate 192, and histidine 194.

Belongs to the PHP family. Homotrimer. It depends on Zn(2+) as a cofactor.

The polypeptide is Probable phosphatase YcdX (Escherichia fergusonii (strain ATCC 35469 / DSM 13698 / CCUG 18766 / IAM 14443 / JCM 21226 / LMG 7866 / NBRC 102419 / NCTC 12128 / CDC 0568-73)).